The sequence spans 571 residues: Proline--tRNA ligase 1 (571 aa).

The protein belongs to the class-II aminoacyl-tRNA synthetase family. ProS type 1 subfamily. As to quaternary structure, homodimer.

It is found in the cytoplasm. The catalysed reaction is tRNA(Pro) + L-proline + ATP = L-prolyl-tRNA(Pro) + AMP + diphosphate. Catalyzes the attachment of proline to tRNA(Pro) in a two-step reaction: proline is first activated by ATP to form Pro-AMP and then transferred to the acceptor end of tRNA(Pro). As ProRS can inadvertently accommodate and process non-cognate amino acids such as alanine and cysteine, to avoid such errors it has two additional distinct editing activities against alanine. One activity is designated as 'pretransfer' editing and involves the tRNA(Pro)-independent hydrolysis of activated Ala-AMP. The other activity is designated 'posttransfer' editing and involves deacylation of mischarged Ala-tRNA(Pro). The misacylated Cys-tRNA(Pro) is not edited by ProRS. The sequence is that of Proline--tRNA ligase 1 from Clostridioides difficile (strain 630) (Peptoclostridium difficile).